The chain runs to 212 residues: Guanylate kinase (212 aa).

Positions 7 to 187 (GLLIVLSGPS…AADRIIAIIR (181 aa)) constitute a Guanylate kinase-like domain. 14–21 (GPSGVGKA) provides a ligand contact to ATP.

Belongs to the guanylate kinase family.

It is found in the cytoplasm. The catalysed reaction is GMP + ATP = GDP + ADP. Its function is as follows. Essential for recycling GMP and indirectly, cGMP. The polypeptide is Guanylate kinase (Onion yellows phytoplasma (strain OY-M)).